The sequence spans 418 residues: Serine--tRNA ligase (418 aa).

231 to 233 is a binding site for L-serine; that stretch reads TAE. 262–264 is a binding site for ATP; that stretch reads RSE. Glutamate 285 contributes to the L-serine binding site. 349–352 is a binding site for ATP; the sequence is EISS. An L-serine-binding site is contributed by serine 385.

This sequence belongs to the class-II aminoacyl-tRNA synthetase family. Type-1 seryl-tRNA synthetase subfamily. As to quaternary structure, homodimer. The tRNA molecule binds across the dimer.

The protein localises to the cytoplasm. The catalysed reaction is tRNA(Ser) + L-serine + ATP = L-seryl-tRNA(Ser) + AMP + diphosphate + H(+). The enzyme catalyses tRNA(Sec) + L-serine + ATP = L-seryl-tRNA(Sec) + AMP + diphosphate + H(+). The protein operates within aminoacyl-tRNA biosynthesis; selenocysteinyl-tRNA(Sec) biosynthesis; L-seryl-tRNA(Sec) from L-serine and tRNA(Sec): step 1/1. Its function is as follows. Catalyzes the attachment of serine to tRNA(Ser). Is also able to aminoacylate tRNA(Sec) with serine, to form the misacylated tRNA L-seryl-tRNA(Sec), which will be further converted into selenocysteinyl-tRNA(Sec). This chain is Serine--tRNA ligase, found in Ureaplasma urealyticum serovar 10 (strain ATCC 33699 / Western).